Consider the following 344-residue polypeptide: UDP-3-O-acylglucosamine N-acyltransferase (344 aa).

Residue His248 is the Proton acceptor of the active site.

The protein belongs to the transferase hexapeptide repeat family. LpxD subfamily. Homotrimer.

The enzyme catalyses a UDP-3-O-[(3R)-3-hydroxyacyl]-alpha-D-glucosamine + a (3R)-hydroxyacyl-[ACP] = a UDP-2-N,3-O-bis[(3R)-3-hydroxyacyl]-alpha-D-glucosamine + holo-[ACP] + H(+). Its pathway is bacterial outer membrane biogenesis; LPS lipid A biosynthesis. Its function is as follows. Catalyzes the N-acylation of UDP-3-O-acylglucosamine using 3-hydroxyacyl-ACP as the acyl donor. Is involved in the biosynthesis of lipid A, a phosphorylated glycolipid that anchors the lipopolysaccharide to the outer membrane of the cell. The chain is UDP-3-O-acylglucosamine N-acyltransferase from Synechocystis sp. (strain ATCC 27184 / PCC 6803 / Kazusa).